Consider the following 163-residue polypeptide: 3-hydroxyacyl-[acyl-carrier-protein] dehydratase FabZ (163 aa).

His58 is a catalytic residue.

The protein belongs to the thioester dehydratase family. FabZ subfamily.

It is found in the cytoplasm. The catalysed reaction is a (3R)-hydroxyacyl-[ACP] = a (2E)-enoyl-[ACP] + H2O. Its function is as follows. Involved in unsaturated fatty acids biosynthesis. Catalyzes the dehydration of short chain beta-hydroxyacyl-ACPs and long chain saturated and unsaturated beta-hydroxyacyl-ACPs. In Francisella tularensis subsp. tularensis (strain FSC 198), this protein is 3-hydroxyacyl-[acyl-carrier-protein] dehydratase FabZ.